The sequence spans 919 residues: Isoleucine--tRNA ligase (919 aa).

A 'HIGH' region motif is present at residues 57–67 (PYANGHIHIGT). Glutamate 553 contributes to the L-isoleucyl-5'-AMP binding site. The 'KMSKS' region signature appears at 594–598 (KMSKS). Lysine 597 contacts ATP. Residues cysteine 887, cysteine 890, cysteine 907, and cysteine 910 each contribute to the Zn(2+) site.

It belongs to the class-I aminoacyl-tRNA synthetase family. IleS type 1 subfamily. In terms of assembly, monomer. Zn(2+) serves as cofactor.

It is found in the cytoplasm. The enzyme catalyses tRNA(Ile) + L-isoleucine + ATP = L-isoleucyl-tRNA(Ile) + AMP + diphosphate. In terms of biological role, catalyzes the attachment of isoleucine to tRNA(Ile). As IleRS can inadvertently accommodate and process structurally similar amino acids such as valine, to avoid such errors it has two additional distinct tRNA(Ile)-dependent editing activities. One activity is designated as 'pretransfer' editing and involves the hydrolysis of activated Val-AMP. The other activity is designated 'posttransfer' editing and involves deacylation of mischarged Val-tRNA(Ile). The polypeptide is Isoleucine--tRNA ligase (Thermotoga petrophila (strain ATCC BAA-488 / DSM 13995 / JCM 10881 / RKU-1)).